A 203-amino-acid polypeptide reads, in one-letter code: MIRALKANGTDQRVLNAMKKVPRHLFLPEDMQSFAYADTPLPIGYDQTISAPHMVAIMCDLLKITEGMTILEIGSGSGYNAAVMAELAGENGKVYTVERIPELVDLARNNLERAGYSNVTVVHDDGSCGLPEHAPYDRIAVTSVAPEVPPPLREQLSKNGIMVIPVGTQYQTLVVVKKDSKGNITHKAMGEVIFVPLIGKYGF.

Residue S50 is part of the active site.

Belongs to the methyltransferase superfamily. L-isoaspartyl/D-aspartyl protein methyltransferase family.

The protein localises to the cytoplasm. It carries out the reaction [protein]-L-isoaspartate + S-adenosyl-L-methionine = [protein]-L-isoaspartate alpha-methyl ester + S-adenosyl-L-homocysteine. Its function is as follows. Catalyzes the methyl esterification of L-isoaspartyl residues in peptides and proteins that result from spontaneous decomposition of normal L-aspartyl and L-asparaginyl residues. It plays a role in the repair and/or degradation of damaged proteins. In Methanococcoides burtonii (strain DSM 6242 / NBRC 107633 / OCM 468 / ACE-M), this protein is Protein-L-isoaspartate O-methyltransferase.